The sequence spans 327 residues: NF-kappa-B inhibitor delta (327 aa).

The segment at Met-1–Ser-40 is disordered. Polar residues predominate over residues Ser-14–Val-23. ANK repeat units follow at residues Glu-62 to His-97, Lys-98 to Ala-127, Gln-131 to Leu-160, Glu-166 to Ser-215, Ser-220 to Ala-250, and His-257 to Leu-290. A disordered region spans residues Leu-293–Ser-327.

The protein belongs to the NF-kappa-B inhibitor family. Interacts with NFKB1, RELA and RELB; in the nucleus. In terms of tissue distribution, specifically expressed in spleen and at low levels in thymus. Expressed in a population of antigen-presenting dendritic cells which may act as regulators of systemic inflammatory response.

The protein resides in the nucleus. Regulates the expression of IL-2, IL-6, and other cytokines through regulation on NF-kappa-B activity. Functions in the regulation of inflammatory responses. Involved in the induction of T helper 17 cells (Th17) differentiation upon recognition of antigen by T cell antigen receptor (TCR). According to PubMed:11931770, it may also regulate TCR-induced negative selection of thymocytes. The sequence is that of NF-kappa-B inhibitor delta (Nfkbid) from Mus musculus (Mouse).